A 703-amino-acid chain; its full sequence is Lethal(3)malignant brain tumor-like protein 2 (703 aa).

The segment at 1 to 70 is disordered; it reads MEKPRGTEET…AGELPTSPLH (70 aa). Phosphoserine is present on S13. Acidic residues predominate over residues 15–25; the sequence is PMEEEEDDDLE. Low complexity predominate over residues 35–49; it reads SYNSSAGSESSSYLE. Residues 50–60 are compositionally biased toward acidic residues; the sequence is ESSEAENEDRE. S67 carries the post-translational modification Phosphoserine. The FCS-type zinc-finger motif lies at 81 to 116; that stretch reads DGSGSEPAVCEMCGIVGTREAFFSKTKRFCSVSCSR. 4 residues coordinate Zn(2+): C90, C93, C110, and C114. 4 MBT repeats span residues 179–283, 291–391, 397–500, and 508–604; these read FDWG…LVPP, TDWK…IKMS, MSHH…LTPP, and FDWE…LQPP. S338 is modified (phosphoserine). A Glycyl lysine isopeptide (Lys-Gly) (interchain with G-Cter in SUMO2) cross-link involves residue K405. 2 disordered regions span residues 604–649 and 672–703; these read PVSA…KKPL and VKEE…ERDS. Residues 619-634 are compositionally biased toward basic residues; sequence TKKKKKQFGKKRKRIP. Residues K647 and K673 each participate in a glycyl lysine isopeptide (Lys-Gly) (interchain with G-Cter in SUMO2) cross-link. Phosphoserine is present on residues S681, S685, and S687. K698 participates in a covalent cross-link: Glycyl lysine isopeptide (Lys-Gly) (interchain with G-Cter in SUMO1); alternate. K698 is covalently cross-linked (Glycyl lysine isopeptide (Lys-Gly) (interchain with G-Cter in SUMO2); alternate).

As to quaternary structure, part of the E2F6.com-1 complex in G0 phase composed of E2F6, MGA, MAX, TFDP1, CBX3, BAT8, EUHMTASE1, RING1, RNF2, MBLR, BAT8 and YAF2.

It localises to the nucleus. Functionally, putative Polycomb group (PcG) protein. PcG proteins maintain the transcriptionally repressive state of genes, probably via a modification of chromatin, rendering it heritably changed in its expressibility. Its association with a chromatin-remodeling complex suggests that it may contribute to prevent expression of genes that trigger the cell into mitosis. Binds to monomethylated and dimethylated 'Lys-20' on histone H4. Binds histone H3 peptides that are monomethylated or dimethylated on 'Lys-4', 'Lys-9' or 'Lys-27'. This Rattus norvegicus (Rat) protein is Lethal(3)malignant brain tumor-like protein 2 (L3mbtl2).